The following is a 118-amino-acid chain: Large ribosomal subunit protein bL20 (118 aa).

This sequence belongs to the bacterial ribosomal protein bL20 family.

In terms of biological role, binds directly to 23S ribosomal RNA and is necessary for the in vitro assembly process of the 50S ribosomal subunit. It is not involved in the protein synthesizing functions of that subunit. This Thermotoga petrophila (strain ATCC BAA-488 / DSM 13995 / JCM 10881 / RKU-1) protein is Large ribosomal subunit protein bL20.